The chain runs to 176 residues: Nucleoside triphosphate/diphosphate phosphatase (176 aa).

Catalysis depends on R23, which acts as the Proton donor. Positions 87, 103, 105, 107, 120, and 123 each coordinate Mg(2+).

Belongs to the Ntdp family. It depends on Mg(2+) as a cofactor.

It catalyses the reaction a ribonucleoside 5'-triphosphate + H2O = a ribonucleoside 5'-diphosphate + phosphate + H(+). The enzyme catalyses a ribonucleoside 5'-diphosphate + H2O = a ribonucleoside 5'-phosphate + phosphate + H(+). Functionally, has nucleoside phosphatase activity towards nucleoside triphosphates and nucleoside diphosphates. This is Nucleoside triphosphate/diphosphate phosphatase from Lactococcus lactis subsp. cremoris (strain MG1363).